A 411-amino-acid polypeptide reads, in one-letter code: GTPase Obg (411 aa).

The region spanning 1-157 is the Obg domain; sequence MQFIDEARFV…REIRLELRVL (157 aa). The tract at residues 20 to 45 is disordered; that stretch reads AVSFHREKYRPRGGPDGGRGGDGGSV. Gly residues predominate over residues 33–43; the sequence is GPDGGRGGDGG. The OBG-type G domain occupies 158–330; it reads SDVGLVGLPN…LERSAEAAPR (173 aa). Residues 164–171, 189–193, 212–215, 276–279, and 311–313 contribute to the GTP site; these read GLPNAGKS, FTTLT, DIPG, NKVD, and ARL. Mg(2+)-binding residues include Ser-171 and Thr-191. One can recognise an OCT domain in the interval 335–411; that stretch reads VFRPSWRGLR…RIGDVSFEFR (77 aa).

This sequence belongs to the TRAFAC class OBG-HflX-like GTPase superfamily. OBG GTPase family. In terms of assembly, monomer. Mg(2+) serves as cofactor.

It localises to the cytoplasm. In terms of biological role, an essential GTPase which binds GTP, GDP and possibly (p)ppGpp with moderate affinity, with high nucleotide exchange rates and a fairly low GTP hydrolysis rate. Plays a role in control of the cell cycle, stress response, ribosome biogenesis and in those bacteria that undergo differentiation, in morphogenesis control. The sequence is that of GTPase Obg from Rubrobacter xylanophilus (strain DSM 9941 / JCM 11954 / NBRC 16129 / PRD-1).